The chain runs to 773 residues: Mitochondrial inner membrane m-AAA protease component yta12 (773 aa).

The disordered stretch occupies residues 83-119 (FSVTSKRSQNGSSGSNSDANGRKNGQKNDDSKKKGLN). Over residues 87-101 (SKRSQNGSSGSNSDA) the composition is skewed to low complexity. 2 helical membrane-spanning segments follow: residues 126–146 (VFEI…AYIL) and 239–259 (VLAT…VIYL). 8 residues coordinate ATP: Val298, Ala299, Thr340, Gly341, Lys342, Thr343, Leu344, and His479. His561 contributes to the Zn(2+) binding site. Glu562 is an active-site residue. 2 residues coordinate Zn(2+): His565 and Asp638. The interval 752-773 (EYKNDHDPRNPPIPPSPQQPSA) is disordered. Pro residues predominate over residues 761–773 (NPPIPPSPQQPSA).

In the N-terminal section; belongs to the AAA ATPase family. It in the C-terminal section; belongs to the peptidase M41 family. In terms of assembly, component of the m-AAA protease complex. It depends on Zn(2+) as a cofactor.

The protein localises to the mitochondrion membrane. The catalysed reaction is ATP + H2O = ADP + phosphate + H(+). Functionally, catalytic component of the m-AAA protease, a protease that plays a key role in proteostasis of inner mitochondrial membrane proteins. Possesses both ATPase and protease activities: the ATPase activity is required to unfold substrates, threading them into the internal proteolytic cavity for hydrolysis into small peptide fragments. The complex is necessary for the assembly of mitochondrial respiratory chain and ATPase complexes. The m-AAA protease carries out protein quality control in the inner membrane of the mitochondria by mediating degradation of mistranslated or misfolded polypeptides. It also mediates protein maturation of the mitochondrial ribosomal subunit mrpl32/bL32m by catalyzing the cleavage of the presequence of mrpl32/bL32m prior to assembly into the mitochondrial ribosome. Also acts as a membrane protein dislocase: required to dislocate moderately hydrophobic transmembrane segments from the membrane. In Schizosaccharomyces pombe (strain 972 / ATCC 24843) (Fission yeast), this protein is Mitochondrial inner membrane m-AAA protease component yta12 (yta12).